The primary structure comprises 90 residues: Small ribosomal subunit protein bS16 (90 aa).

It belongs to the bacterial ribosomal protein bS16 family.

The protein is Small ribosomal subunit protein bS16 of Lactococcus lactis subsp. lactis (strain IL1403) (Streptococcus lactis).